The primary structure comprises 93 residues: Acylphosphatase (93 aa).

In terms of domain architecture, Acylphosphatase-like spans 6-93; sequence RAHVFISGRV…GEERGFSIIW (88 aa). Catalysis depends on residues Arg-21 and Asn-39.

Belongs to the acylphosphatase family.

It carries out the reaction an acyl phosphate + H2O = a carboxylate + phosphate + H(+). This chain is Acylphosphatase (acyP), found in Roseiflexus sp. (strain RS-1).